We begin with the raw amino-acid sequence, 248 residues long: Superoxide dismutase [Mn] 1 (248 aa).

The N-terminal stretch at 1 to 41 is a signal peptide; the sequence is MQTTFRRILILFVGLLVPLFFACQSNSQVDAAPSAAPQLSA. Mn(2+)-binding residues include His68, His123, Asp208, and His212.

This sequence belongs to the iron/manganese superoxide dismutase family. Homodimer. Mn(2+) is required as a cofactor.

It catalyses the reaction 2 superoxide + 2 H(+) = H2O2 + O2. In terms of biological role, destroys superoxide anion radicals which are normally produced within the cells and which are toxic to biological systems. The chain is Superoxide dismutase [Mn] 1 (sodA1) from Leptolyngbya boryana (Plectonema boryanum).